A 467-amino-acid chain; its full sequence is Calcium-binding protein P (467 aa).

2 stretches are compositionally biased toward pro residues: residues 1-10 (MQNPQNPPPA) and 45-62 (QYPP…PPYP). The disordered stretch occupies residues 1–311 (MQNPQNPPPA…GAYPGQPPMG (311 aa)). The short motif at 45–49 (QYPPQ) is the XYPPX element. A compositionally biased stretch (low complexity) spans 63–74 (GTQQPGAPGAPG). 17 consecutive short sequence motifs (XYPPX) follow at residues 75 to 79 (QYPPQ), 83 to 87 (QYPPQ), 94 to 98 (QYPPQ), 104 to 108 (GYPPQ), 115 to 119 (QYPPQ), 125 to 129 (GYPPQ), 136 to 140 (QYPPQ), 146 to 150 (QYPPQ), 157 to 161 (QYPPQ), 165 to 169 (QYPPQ), 176 to 180 (AYPPQ), 187 to 191 (AYPPQ), 221 to 225 (GVPPQ), 238 to 242 (AYPPQ), 247 to 251 (AYPPQ), 256 to 260 (AYPPQ), and 275 to 279 (AYPPQ). Composition is skewed to pro residues over residues 75 to 109 (QYPP…PPQQ) and 118 to 131 (PQQP…PQQP). The span at 132–145 (GAPGQYPPQQGQPG) shows a compositional bias: low complexity. Low complexity-rich tracts occupy residues 153–193 (GQPG…PQQG) and 215–246 (AYPG…GQPG). Residues 253–311 (QPGAYPPQQQQVAYPGQQPPMGAYPPQQGAYPGQQGAYPGQQGAYPGQQGAYPGQPPMG) are compositionally biased toward low complexity. 2 consecutive EF-hand domains span residues 399–434 (QKMM…LGYY) and 435–467 (FSKG…WSMQ). Ca(2+) contacts are provided by Asp412, Asn414, Ser416, Thr418, and Glu423.

The chain is Calcium-binding protein P (cbpP) from Dictyostelium discoideum (Social amoeba).